We begin with the raw amino-acid sequence, 983 residues long: ER membrane protein complex subunit 1 (983 aa).

Residues 1 to 16 form the signal peptide; it reads MAAGLWALLLPLAAAV. Residues 17 to 952 are Lumenal-facing; sequence YEDQVGKFDW…FDVLKDDYDY (936 aa). Cysteines 221 and 231 form a disulfide. Asparagine 279 carries N-linked (GlcNAc...) asparagine glycosylation. Cysteine 332 and cysteine 360 are disulfide-bonded. Asparagine 362, asparagine 808, and asparagine 903 each carry an N-linked (GlcNAc...) asparagine glycan. Residues 953–973 traverse the membrane as a helical segment; that stretch reads VLISSVLFGLVFATMITKRLA. Topologically, residues 974–983 are cytoplasmic; sequence QVKLLNRAWR.

Belongs to the EMC1 family. As to quaternary structure, component of the ER membrane protein complex (EMC).

The protein resides in the endoplasmic reticulum membrane. In terms of biological role, part of the endoplasmic reticulum membrane protein complex (EMC) that enables the energy-independent insertion into endoplasmic reticulum membranes of newly synthesized membrane proteins. Preferentially accommodates proteins with transmembrane domains that are weakly hydrophobic or contain destabilizing features such as charged and aromatic residues. Involved in the cotranslational insertion of multi-pass membrane proteins in which stop-transfer membrane-anchor sequences become ER membrane spanning helices. It is also required for the post-translational insertion of tail-anchored/TA proteins in endoplasmic reticulum membranes. By mediating the proper cotranslational insertion of N-terminal transmembrane domains in an N-exo topology, with translocated N-terminus in the lumen of the ER, controls the topology of multi-pass membrane proteins like the G protein-coupled receptors. By regulating the insertion of various proteins in membranes, it is indirectly involved in many cellular processes. The polypeptide is ER membrane protein complex subunit 1 (EMC1) (Gallus gallus (Chicken)).